Consider the following 257-residue polypeptide: Capsid protein (257 aa).

The short motif at 3 to 20 (KRTGDILMSSPLSKFRRK) is the Bipartite nuclear localization signal element. Residues 40 to 54 (KRRSWTYRPMYRKPR) carry the Nuclear localization signal motif. The segment at 68-85 (CEGPCKVQSYEQRDDVKH) is a zinc-finger region. The Nuclear export signal motif lies at 101-122 (ITHRVGKRFCIKSIYILGKIWM). The Bipartite nuclear localization signal motif lies at 201 to 248 (KRFFKVNTHVVYNHQEQAKYENHTENALLLYMACTHASNPVYATLKIR).

Belongs to the geminiviridae capsid protein family. Homomultimer. Binds to single-stranded and double-stranded viral DNA. Interacts (via nuclear localization signals) with host importin alpha-1a.

The protein localises to the virion. It is found in the host nucleus. Encapsidates the viral genome into characteristic twinned ('geminate') particles. Binds the genomic viral ssDNA and shuttles it into and out of the cell nucleus. Plays a role in protection of the genome from degradation, virus acquisition and transmission by insect vectors, infectivity, and systemic movement. The CP of monopartite geminiviruses is absolutely essential for virus movement. The polypeptide is Capsid protein (Solanum lycopersicum (Tomato)).